The chain runs to 427 residues: Mucorpepsin (427 aa).

Residues 1-22 (MLFSKISSAILLTAASFALTSA) form the signal peptide. A propeptide spans 23-66 (RPVSKQSDADDKLLALPLTSVNRKYSQTKHGQQAAEKLGGIKAF) (activation peptide). The 333-residue stretch at 86–418 (YAIPVSIGTP…DFGKNRIGFA (333 aa)) folds into the Peptidase A1 domain. Aspartate 104 is a catalytic residue. Cysteine 117 and cysteine 123 are joined by a disulfide. N-linked (GlcNAc...) asparagine glycosylation occurs at asparagine 254. The active site involves aspartate 303. A disulfide bond links cysteine 338 and cysteine 382.

It belongs to the peptidase A1 family.

It carries out the reaction Hydrolysis of proteins, favoring hydrophobic residues at P1 and P1'. Clots milk. Does not accept Lys at P1, and hence does not activate trypsinogen.. Functionally, this enzyme, capable of clotting milk is frequently used for cheese production. The protein is Mucorpepsin of Rhizomucor pusillus.